Reading from the N-terminus, the 247-residue chain is Cell division protein ZapD (247 aa).

The protein belongs to the ZapD family. Interacts with FtsZ.

The protein localises to the cytoplasm. Its function is as follows. Cell division factor that enhances FtsZ-ring assembly. Directly interacts with FtsZ and promotes bundling of FtsZ protofilaments, with a reduction in FtsZ GTPase activity. This chain is Cell division protein ZapD, found in Shigella boydii serotype 18 (strain CDC 3083-94 / BS512).